Reading from the N-terminus, the 642-residue chain is tRNA uridine 5-carboxymethylaminomethyl modification enzyme MnmG (642 aa).

Residues 12 to 17, V124, and S179 each bind FAD; that span reads GAGHAG. NAD(+) is bound at residue 272 to 286; sequence GPRYCPSIEDKITRF. Q369 lines the FAD pocket.

It belongs to the MnmG family. Homodimer. Heterotetramer of two MnmE and two MnmG subunits. It depends on FAD as a cofactor.

Its subcellular location is the cytoplasm. In terms of biological role, NAD-binding protein involved in the addition of a carboxymethylaminomethyl (cmnm) group at the wobble position (U34) of certain tRNAs, forming tRNA-cmnm(5)s(2)U34. This Bdellovibrio bacteriovorus (strain ATCC 15356 / DSM 50701 / NCIMB 9529 / HD100) protein is tRNA uridine 5-carboxymethylaminomethyl modification enzyme MnmG.